The chain runs to 313 residues: 2-phosphoglycerate kinase (313 aa).

In terms of domain architecture, ATP-cone spans 8–95; that stretch reads SRILVKDKEY…LWRRVLKKHS (88 aa).

This sequence belongs to the 2-phosphoglycerate kinase family. It depends on a divalent metal cation as a cofactor.

It carries out the reaction (2R)-2-phosphoglycerate + ATP = (2R)-2,3-bisphosphoglycerate + ADP + H(+). It participates in thermoadapter biosynthesis; cyclic 2,3-diphosphoglycerate biosynthesis; cyclic 2,3-diphosphoglycerate from 2-phospho-D-glycerate: step 1/2. Catalyzes the phosphorylation of 2-phosphoglycerate to 2,3-diphosphoglycerate. Involved in the biosynthesis of cyclic 2,3-bisphosphoglycerate, a thermoprotectant. The polypeptide is 2-phosphoglycerate kinase (Methanococcus maripaludis (strain C5 / ATCC BAA-1333)).